The primary structure comprises 178 residues: MDKQKIADSIRAVYNYKPGVIFRDITTLIGDAEVFKEVINILRSRYENQSIDFIAAIEARGFIFGSALAYALGIGFVPIRKKGKLPYNTISEKYTLEYGTDELHIHTDAFRDKKNAKVVLIDDLIATGGTAEASVKLIKSIGAQCVEAAFVINLKGLEGEKKLAPYTQVFSIVEYEGK.

The protein belongs to the purine/pyrimidine phosphoribosyltransferase family. In terms of assembly, homodimer.

It is found in the cytoplasm. The enzyme catalyses AMP + diphosphate = 5-phospho-alpha-D-ribose 1-diphosphate + adenine. It functions in the pathway purine metabolism; AMP biosynthesis via salvage pathway; AMP from adenine: step 1/1. In terms of biological role, catalyzes a salvage reaction resulting in the formation of AMP, that is energically less costly than de novo synthesis. This Helicobacter hepaticus (strain ATCC 51449 / 3B1) protein is Adenine phosphoribosyltransferase.